Consider the following 767-residue polypeptide: MTISPPERGSTAKTQVEKVDNPATFELFGKPGHFDRALAKGPKTTTWVWNLHANAHDFDSHTSDLEEVSRKIFSAHFGHLAVIFIWLSGAFFHGARFSNFSGWLADPTHVKPSAQVVWPVFGQEILNGDMGAGFQGIQITSGLFHVWRAWGITNETQLMSLAIGALVMAGLMLNAGVFHYHKAAPKLEWFQNVESMLNHHLAGLLGLGSLSWTGHLLHVSLPTTKLMDAIDAGQPLVLNGKTIASVADIPLPHEFFNQDLLAQLYPGFGAGIGAFFSGNWAAYSDFLTFKGGLNPVTGSMWMSDIAHHHLAIAVLFIVAGHMYRTNWGIGHSIKEILEGQKGDPLLFPATKGHDGLFEFMTTSWHAQLAVNLAMLGSLSIIVAQHMYAMPPYAYMSIDYPTQIGLFTHHMWIGGFLIVGAAAHAAIAMIRDYDPAKHVDNVLDRVLKARDALISHLNWVCIWLGFHSFGLYIHNDTMRALGRPQDMFSDSAIQLKPVFAQWIQGLHAAAAGSTAPNALAGVSEVFNGSVVAVGGKVAAAPIPLGTADFMVHHIHAFTIHVTVLILLKGVLYARNSRLIPDKANLGFRFPCDGPGRGGTCQVSAWDHVFLGLFWMYNSLSIVIFHFSWKMQSDVWGTVNADGSVQHITNGNFANSAITINGWLRDFLWAQAAQVINSYGSNTSAYGLMFLGAHFVWAFSLMFLFSGRGYWQELIESIVWAHNKLKVAPAIQPRALSITQGRAVGVAHYLLGGIATTWAFFHAHILVVG.

8 consecutive transmembrane segments (helical) span residues 72–95 (IFSA…FHGA), 158–181 (LMSL…FHYH), 197–221 (LNHH…HVSL), 305–323 (IAHH…GHMY), 364–387 (WHAQ…QHMY), 403–429 (IGLF…IAMI), 451–473 (ALIS…LYIH), and 548–566 (FMVH…LILL). [4Fe-4S] cluster is bound by residues C590 and C599. 2 consecutive transmembrane segments (helical) span residues 606–627 (HVFL…HFSW) and 681–703 (TSAY…MFLF). H692 is a chlorophyll a' binding site. Chlorophyll a-binding residues include M700 and Y708. W709 contacts phylloquinone. A helical transmembrane segment spans residues 741 to 761 (AVGVAHYLLGGIATTWAFFHA).

This sequence belongs to the PsaA/PsaB family. The PsaA/B heterodimer binds the P700 chlorophyll special pair and subsequent electron acceptors. PSI consists of a core antenna complex that captures photons, and an electron transfer chain that converts photonic excitation into a charge separation. The cyanobacterial PSI reaction center is composed of one copy each of PsaA,B,C,D,E,F,I,J,K,L,M and X, and forms trimeric complexes. PSI electron transfer chain: 5 chlorophyll a, 1 chlorophyll a', 2 phylloquinones and 3 4Fe-4S clusters. PSI core antenna: 90 chlorophyll a, 22 carotenoids, 3 phospholipids and 1 galactolipid. P700 is a chlorophyll a/chlorophyll a' dimer, A0 is one or more chlorophyll a, A1 is one or both phylloquinones and FX is a shared 4Fe-4S iron-sulfur center. is required as a cofactor.

The protein resides in the cellular thylakoid membrane. It catalyses the reaction reduced [plastocyanin] + hnu + oxidized [2Fe-2S]-[ferredoxin] = oxidized [plastocyanin] + reduced [2Fe-2S]-[ferredoxin]. In terms of biological role, psaA and PsaB bind P700, the primary electron donor of photosystem I (PSI), as well as the electron acceptors A0, A1 and FX. PSI is a plastocyanin/cytochrome c6-ferredoxin oxidoreductase, converting photonic excitation into a charge separation, which transfers an electron from the donor P700 chlorophyll pair to the spectroscopically characterized acceptors A0, A1, FX, FA and FB in turn. Oxidized P700 is reduced on the lumenal side of the thylakoid membrane by plastocyanin or cytochrome c6. In Synechococcus sp. (strain WH7803), this protein is Photosystem I P700 chlorophyll a apoprotein A1.